The primary structure comprises 401 residues: UDP-GlcNAc:betaGal beta-1,3-N-acetylglucosaminyltransferase 9 (401 aa).

At 1–10 (MRRRLRLRRE) the chain is on the cytoplasmic side. The helical; Signal-anchor for type II membrane protein transmembrane segment at 11–31 (ALLTLLLGATLGLLLYAQQEG) threads the bilayer. Residues 32–401 (AAPTTSAPRA…VPAGPFQWGP (370 aa)) are Lumenal-facing. Residues 33-85 (APTTSAPRAQGRAAPGPTPGLRVFQAPDTGAAPPAYEGDTPEPPTPTGPFDFG) form a disordered region. Positions 38 to 47 (APRAQGRAAP) are enriched in low complexity.

Belongs to the glycosyltransferase 31 family.

It localises to the golgi apparatus membrane. This Bos taurus (Bovine) protein is UDP-GlcNAc:betaGal beta-1,3-N-acetylglucosaminyltransferase 9.